The sequence spans 153 residues: Protein ripply2.2 (153 aa).

Positions 58 to 61 (WRPW) match the WRPW motif; required for transcriptional repression and interaction with tle4 motif. Residues 93 to 128 (HPVRLFWPKSKLLDNTYQEAADLLRNFPVQATISLY) form a ripply homology domain region. Residues 127–153 (LYNDSESDTDNEEDSSEEEQDSGFESE) are disordered. The segment covering 131–153 (SESDTDNEEDSSEEEQDSGFESE) has biased composition (acidic residues).

Belongs to the ripply family. As to quaternary structure, interacts with tle4 and tbx6, and mediates interaction between these proteins. In terms of tissue distribution, expressed in the presomitic mesoderm (PSM) in the anterior halves of somitomeres S-I, S-II and S-III.

The protein localises to the nucleus. Functionally, required during somitogenesis for the formation of somite boundaries. Represses the expression of genes involved in somite segmentation by acting with the corepressor tle4 to down-regulate the transcriptional activity of tbx6. May act by regulating the activity of tle4. Represses transcription of delta2, thy1 and ripply2.2/bowline itself. The protein is Protein ripply2.2 (ripply2.2) of Xenopus laevis (African clawed frog).